Reading from the N-terminus, the 222-residue chain is RING finger protein 141 (222 aa).

The RING-type zinc-finger motif lies at 147–184 (CCICMDGKADLILPCAHSFCQKCIDKWSGQSRNCPVCR).

The protein is RING finger protein 141 (rnf141) of Danio rerio (Zebrafish).